We begin with the raw amino-acid sequence, 327 residues long: Probable cell division protein WhiA (327 aa).

A DNA-binding region (H-T-H motif) is located at residues 275-308; that stretch reads SLEELGRLADPPMTKDAVAGRIRRLLSMADRKAK.

This sequence belongs to the WhiA family.

Its function is as follows. Involved in cell division and chromosome segregation. The chain is Probable cell division protein WhiA from Mycobacterium bovis (strain ATCC BAA-935 / AF2122/97).